The following is a 380-amino-acid chain: Cytochrome b (380 aa).

4 helical membrane-spanning segments follow: residues 34–54 (FGSL…FLAM), 78–99 (WLIR…YLHI), 114–134 (WNIG…GYVL), and 179–199 (FFTF…IHLL). Residues His-84 and His-98 each coordinate heme b. The heme b site is built by His-183 and His-197. Residue His-202 coordinates a ubiquinone. 4 helical membrane-spanning segments follow: residues 227 to 247 (YKDL…ALFT), 289 to 309 (LGGV…PILH), 321 to 341 (ITQI…WIGG), and 348 to 368 (FITI…ILFP).

It belongs to the cytochrome b family. As to quaternary structure, the cytochrome bc1 complex contains 3 respiratory subunits (MT-CYB, CYC1 and UQCRFS1), 2 core proteins (UQCRC1 and UQCRC2) and probably 6 low-molecular weight proteins. Requires heme b as cofactor.

The protein localises to the mitochondrion inner membrane. Component of the ubiquinol-cytochrome c reductase complex (complex III or cytochrome b-c1 complex) that is part of the mitochondrial respiratory chain. The b-c1 complex mediates electron transfer from ubiquinol to cytochrome c. Contributes to the generation of a proton gradient across the mitochondrial membrane that is then used for ATP synthesis. The polypeptide is Cytochrome b (mt-cyb) (Hemitrygon laosensis (Mekong freshwater stingray)).